The primary structure comprises 296 residues: MEINGVEIEDTFAEAFEAKMARVLITAASHKWAMIAVKEATGFGTSVIMCPAEAGIDCGYVPPEETPDGRPGVTIMIGHNDEDELKEQLLDRIGQCVMTAPTASAFDAMPEAEKEDEDRVGYKLSFFGDGYQEEDELDGRKVWKIPVVEGEFIVEDSFGITTGVAGGNFYIMAESQPAGLQAAEAAVDAIKGVEGAYAPFPGGIVASASKVGSKQYDFLPASTNDAYCPTVEDNELPEGVKCVYEIVINGLNEEAVKEAMRVGIEAACQQPGVVKISAGNFGGKLGQYEIHLHDLF.

It belongs to the FTR family. In terms of assembly, homotetramer composed of two dimers. Dimerization is sufficient for enzyme activity, but tetramerization is required for high thermostability.

The protein localises to the cytoplasm. The catalysed reaction is N-formylmethanofuran + 5,6,7,8-tetrahydromethanopterin + H(+) = N(5)-formyl-5,6,7,8-tetrahydromethanopterin + methanofuran. It participates in one-carbon metabolism; methanogenesis from CO(2); 5,10-methenyl-5,6,7,8-tetrahydromethanopterin from CO(2): step 2/3. Requires high salt concentrations for activity and thermostability; 1.5-1.8 M KH(2)PO(4) stimulates activity while stabilizing the enzyme. Functionally, catalyzes the reversible transfer of a formyl group from formylmethanofuran (formyl-MFR) to tetrahydromethanopterin (H(4)MPT) to produce 5-formyl tetrahydromethanopterin (5-formyl-H(4)MPT) and methanofuran (MFR). Acts via a ternary-complex mechanism. Uses N-furfurylformamide much less efficiently, does not use N-methylformamide or formamide. Protein overexpressed in E.coli has very similar properties to enzyme purified from M.kandleri. This is Formylmethanofuran--tetrahydromethanopterin formyltransferase from Methanopyrus kandleri (strain AV19 / DSM 6324 / JCM 9639 / NBRC 100938).